A 56-amino-acid chain; its full sequence is Mitoregulin (56 aa).

Residues 2-9 are Mitochondrial matrix-facing; it reads ADVSERTL. A helical transmembrane segment spans residues 10–27; sequence QLSVLVAFASGVLLGWQA. Over 28-56 the chain is Mitochondrial intermembrane; it reads NRLRRRYLDWRKRRLQDKLAATQKKLDLA.

Interacts with mitochondrial trifunctional enzyme, a heterotetrameric complex composed of 2 HADHA subunits and 2 HADHB subunits. Interacts with cytochrome b5 reductase CYB5R3; the interaction is required to maintain cellular lipid composition and leads to stimulation of mitochondrial respiratory complex I activity. Interacts with ATP synthase subunit ATP5F1B/ATP5B.

The protein resides in the mitochondrion inner membrane. Positively regulates mitochondrial complex assembly and/or stability. Increases mitochondrial membrane potential while decreasing mitochondrial reactive oxygen species. Increases mitochondrial respiration rate. Increased mitochondrial respiratory activity promotes myogenic differentiation which facilitates muscle growth and regeneration. Increases mitochondrial calcium retention capacity. Plays a role in maintenance of cellular lipid composition through its interaction with cytochrome b5 reductase CYB5R3 which is required for mitochondrial respiratory complex I activity. Interacts with the mitochondrial trifunctional enzyme complex (MTE) and enhances fatty acid beta-oxidation. Not required for MTE formation or stability. Modulates triglyceride clearance in adipocytes through its role in regulating fatty acid beta-oxidation and lipolysis. This Homo sapiens (Human) protein is Mitoregulin.